Consider the following 239-residue polypeptide: 1-(5-phosphoribosyl)-5-[(5-phosphoribosylamino)methylideneamino] imidazole-4-carboxamide isomerase (239 aa).

The active-site Proton acceptor is the Asp-9. Asp-131 acts as the Proton donor in catalysis.

This sequence belongs to the HisA/HisF family.

It localises to the cytoplasm. It catalyses the reaction 1-(5-phospho-beta-D-ribosyl)-5-[(5-phospho-beta-D-ribosylamino)methylideneamino]imidazole-4-carboxamide = 5-[(5-phospho-1-deoxy-D-ribulos-1-ylimino)methylamino]-1-(5-phospho-beta-D-ribosyl)imidazole-4-carboxamide. It participates in amino-acid biosynthesis; L-histidine biosynthesis; L-histidine from 5-phospho-alpha-D-ribose 1-diphosphate: step 4/9. In Parabacteroides distasonis (strain ATCC 8503 / DSM 20701 / CIP 104284 / JCM 5825 / NCTC 11152), this protein is 1-(5-phosphoribosyl)-5-[(5-phosphoribosylamino)methylideneamino] imidazole-4-carboxamide isomerase.